The chain runs to 1663 residues: TPR repeat-containing protein DDB_G0287407 (1663 aa).

2 disordered regions span residues 84–109 (RKTQ…QKGQ) and 326–359 (SEYS…NSNQ). Residues 89–105 (TSSNGSTSTTTTTTTTT) are compositionally biased toward low complexity. A compositionally biased stretch (acidic residues) spans 333-352 (DDGENDQSDDDDDNEDDDDF). 6 TPR repeats span residues 1110 to 1143 (SDVW…YINN), 1150 to 1183 (AKVD…YTKE), 1192 to 1225 (AITL…CESK), 1234 to 1269 (ADIA…TESK), 1278 to 1311 (ARIL…YEAR), and 1320 to 1353 (SQIL…TKKI). Disordered regions lie at residues 1500–1528 (VAQP…QQQR) and 1544–1571 (QKVS…RQNT). Positions 1516–1547 (RTQQAIQQGQQQRQQVQQQQQQVQQQMSQKVS) form a coiled coil. Low complexity-rich tracts occupy residues 1518–1528 (QQAIQQGQQQR) and 1544–1563 (QKVS…QPSQ).

This Dictyostelium discoideum (Social amoeba) protein is TPR repeat-containing protein DDB_G0287407.